The chain runs to 383 residues: Cathepsin D (383 aa).

An N-terminal signal peptide occupies residues 1-18 (MKLLILTLFLATIVLAQA). A propeptide spanning residues 19-48 (LTVPLNFHQASRESRRRVPQKWSNRLSALN) is cleaved from the precursor. The region spanning 63–378 (YYGAITIGTP…DFGNKQVGFA (316 aa)) is the Peptidase A1 domain. Aspartate 81 is an active-site residue. Residues cysteine 94 and cysteine 101 are joined by a disulfide bond. Asparagine 118 and asparagine 238 each carry an N-linked (GlcNAc...) asparagine glycan. Cysteine 259 and cysteine 263 are joined by a disulfide. Aspartate 268 is an active-site residue. The cysteines at positions 302 and 339 are disulfide-linked. An N-linked (GlcNAc...) asparagine glycan is attached at asparagine 310.

The protein belongs to the peptidase A1 family. As to quaternary structure, monomer. N-glycosylated on 2 out of the 3 potential sites. Glycans contain sulfated Mannose.

The protein resides in the lysosome. It is found in the secreted. The catalysed reaction is Specificity similar to, but narrower than, that of pepsin A. Does not cleave the 4-Gln-|-His-5 bond in B chain of insulin.. Functionally, protease that may act during cell growth and/or development. The protein is Cathepsin D (ctsD) of Dictyostelium discoideum (Social amoeba).